A 368-amino-acid chain; its full sequence is MHSFQLLGLAALGSLVAAAPSPSRVSDLTERSSSCTFTDAAKASSSASSCSSIVLKDIAVPAGKTLDLSHVKDGTTITFEGTTTFGYKEWKGPLIRLAGKDITVTMAKGAVIDGEGSRWWDGKGTNGGKTKPKFLYAHKLEDSTIKGLNIKNTPVQAISVQANNLHLTDITIDNSDGDSKGGHNTDGFDISESNGVYISGANVKNQDDCIAINSGKNIEFTGGTCSGGHGLSIGSIGGRDDNTVQGVKITDSTVTNSDNGIRIKTIVDETGSVSDVTYSNIKLSGIHKKGIVIQQDYKNGGPTGKPSNGIPIKDVTVDGITGSVDSKATPVYILCGSGSCSDWTWKNVKLSGGKSSSECKNLPSGVSC.

The first 18 residues, 1–18 (MHSFQLLGLAALGSLVAA), serve as a signal peptide directing secretion. The propeptide occupies 19-31 (APSPSRVSDLTER). A disulfide bridge connects residues C35 and C50. PbH1 repeat units lie at residues 162-192 (ANNLHLTDITIDNSDGDSKGGHNTDGFDISE), 193-214 (SNGVYISGANVKNQDDCIAINS), 215-235 (GKNIEFTGGTCSGGHGLSIGS), 244-265 (VQGVKITDSTVTNSDNGIRIKT), 273-295 (VSDVTYSNIKLSGIHKKGIVIQQ), and 307-328 (SNGIPIKDVTVDGITGSVDSKA). The active-site Proton donor is D207. An intrachain disulfide couples C209 to C225. The active site involves H229. Disulfide bonds link C335/C340 and C359/C368.

The protein belongs to the glycosyl hydrolase 28 family.

It localises to the secreted. The catalysed reaction is (1,4-alpha-D-galacturonosyl)n+m + H2O = (1,4-alpha-D-galacturonosyl)n + (1,4-alpha-D-galacturonosyl)m.. Functionally, involved in maceration and soft-rotting of plant tissue. Hydrolyzes the 1,4-alpha glycosidic bonds of de-esterified pectate in the smooth region of the plant cell wall. The sequence is that of Probable endopolygalacturonase I (pgaI) from Aspergillus terreus (strain NIH 2624 / FGSC A1156).